The primary structure comprises 460 residues: GTPase Der (460 aa).

EngA-type G domains lie at 2-164 (QSII…HEEF) and 196-368 (IRVG…ENFT). GTP-binding positions include 8–15 (GKPNVGKS), 55–59 (DSGGL), 116–119 (NKVD), 202–209 (GRVNVGKS), 249–253 (DTAGI), and 313–316 (NKWD). The 85-residue stretch at 369–453 (QKIQTSKLNT…PLVIASRKKG (85 aa)) folds into the KH-like domain.

It belongs to the TRAFAC class TrmE-Era-EngA-EngB-Septin-like GTPase superfamily. EngA (Der) GTPase family. As to quaternary structure, associates with the 50S ribosomal subunit.

Its function is as follows. GTPase that plays an essential role in the late steps of ribosome biogenesis. This is GTPase Der from Campylobacter jejuni subsp. jejuni serotype O:2 (strain ATCC 700819 / NCTC 11168).